Consider the following 1089-residue polypeptide: Probable transport protein MmpL8 (1089 aa).

The segment at 1–26 (MCDVLMQPVRTPRPSTNLRSKPLRPT) is disordered. 12 helical membrane passes run 44-64 (WVVI…VPSL), 222-242 (ITIL…TMVL), 257-277 (LVAI…IFMS), 316-336 (IGKV…GMVF), 349-369 (LGIS…ALMV), 400-420 (KTHL…AGLA), 555-575 (AIST…LLGG), 874-894 (IIAM…RAIV), 898-918 (YLIG…VIVF), 930-950 (IPGL…MLLI), 973-993 (GGVI…LVFA), and 996-1016 (GSVV…TFLV). The segment at 1056–1078 (RTKRKPLLPKEEEEQSPPDDDDL) is disordered. The span at 1066-1078 (EEEEQSPPDDDDL) shows a compositional bias: acidic residues.

Belongs to the resistance-nodulation-cell division (RND) (TC 2.A.6) family. MmpL subfamily.

It is found in the cell membrane. The protein is Probable transport protein MmpL8 (mmpL8) of Mycobacterium bovis (strain ATCC BAA-935 / AF2122/97).